The sequence spans 54 residues: UPF0181 protein APJL_0874 (54 aa).

This sequence belongs to the UPF0181 family.

This chain is UPF0181 protein APJL_0874, found in Actinobacillus pleuropneumoniae serotype 3 (strain JL03).